The sequence spans 73 residues: DNA-directed RNA polymerase subunit omega (73 aa).

Belongs to the RNA polymerase subunit omega family. In terms of assembly, the RNAP catalytic core consists of 2 alpha, 1 beta, 1 beta' and 1 omega subunit. When a sigma factor is associated with the core the holoenzyme is formed, which can initiate transcription.

The catalysed reaction is RNA(n) + a ribonucleoside 5'-triphosphate = RNA(n+1) + diphosphate. Functionally, promotes RNA polymerase assembly. Latches the N- and C-terminal regions of the beta' subunit thereby facilitating its interaction with the beta and alpha subunits. This is DNA-directed RNA polymerase subunit omega from Oleidesulfovibrio alaskensis (strain ATCC BAA-1058 / DSM 17464 / G20) (Desulfovibrio alaskensis).